The chain runs to 125 residues: Large ribosomal subunit protein bL12 (125 aa).

The protein belongs to the bacterial ribosomal protein bL12 family. As to quaternary structure, homodimer. Part of the ribosomal stalk of the 50S ribosomal subunit. Forms a multimeric L10(L12)X complex, where L10 forms an elongated spine to which 2 to 4 L12 dimers bind in a sequential fashion. Binds GTP-bound translation factors.

Functionally, forms part of the ribosomal stalk which helps the ribosome interact with GTP-bound translation factors. Is thus essential for accurate translation. The chain is Large ribosomal subunit protein bL12 from Mannheimia succiniciproducens (strain KCTC 0769BP / MBEL55E).